We begin with the raw amino-acid sequence, 765 residues long: Ankyrin repeat and protein kinase domain-containing protein 1 (765 aa).

Residues 22 to 289 (EGDWRLVASG…DITIETDILL (268 aa)) enclose the Protein kinase domain. Residues 28–36 (VASGGFSQV) and Lys51 contribute to the ATP site. Catalysis depends on Asp145, which acts as the Proton acceptor. ANK repeat units lie at residues 361–390 (NKVT…DVDC), 394–423 (SGYT…DANR), 427–456 (DGWA…CVDA), 460–489 (EGWT…DPNL), 493–522 (EGKT…ELDA), 526–555 (NLRT…VPDA), 559–588 (SGYG…SLEL), 592–621 (QGWT…NMGA), 625–654 (VNWT…DPNA), 658–687 (SGWT…NVHA), 691–720 (VGWT…QLDV), and 724–753 (VSCT…SVAT).

The protein belongs to the protein kinase superfamily. TKL Ser/Thr protein kinase family. In terms of tissue distribution, highly expressed in brain and weakly expressed in placenta and spinal cord.

It carries out the reaction L-seryl-[protein] + ATP = O-phospho-L-seryl-[protein] + ADP + H(+). The enzyme catalyses L-threonyl-[protein] + ATP = O-phospho-L-threonyl-[protein] + ADP + H(+). The chain is Ankyrin repeat and protein kinase domain-containing protein 1 (ANKK1) from Homo sapiens (Human).